The chain runs to 236 residues: Peptidase E (236 aa).

Catalysis depends on charge relay system residues serine 122, aspartate 137, and histidine 159.

Belongs to the peptidase S51 family.

It localises to the cytoplasm. The catalysed reaction is Dipeptidase E catalyzes the hydrolysis of dipeptides Asp-|-Xaa. It does not act on peptides with N-terminal Glu, Asn or Gln, nor does it cleave isoaspartyl peptides.. Hydrolyzes dipeptides containing N-terminal aspartate residues. May play a role in allowing the cell to use peptide aspartate to spare carbon otherwise required for the synthesis of the aspartate family of amino acids. The chain is Peptidase E from Shewanella sp. (strain ANA-3).